Here is a 237-residue protein sequence, read N- to C-terminus: 1-(5-phosphoribosyl)-5-[(5-phosphoribosylamino)methylideneamino] imidazole-4-carboxamide isomerase (237 aa).

The active-site Proton acceptor is D8. The Proton donor role is filled by D127.

The protein belongs to the HisA/HisF family.

The protein localises to the cytoplasm. The catalysed reaction is 1-(5-phospho-beta-D-ribosyl)-5-[(5-phospho-beta-D-ribosylamino)methylideneamino]imidazole-4-carboxamide = 5-[(5-phospho-1-deoxy-D-ribulos-1-ylimino)methylamino]-1-(5-phospho-beta-D-ribosyl)imidazole-4-carboxamide. It functions in the pathway amino-acid biosynthesis; L-histidine biosynthesis; L-histidine from 5-phospho-alpha-D-ribose 1-diphosphate: step 4/9. The protein is 1-(5-phosphoribosyl)-5-[(5-phosphoribosylamino)methylideneamino] imidazole-4-carboxamide isomerase of Sulfurovum sp. (strain NBC37-1).